A 155-amino-acid chain; its full sequence is SsrA-binding protein (155 aa).

The protein belongs to the SmpB family.

The protein resides in the cytoplasm. In terms of biological role, required for rescue of stalled ribosomes mediated by trans-translation. Binds to transfer-messenger RNA (tmRNA), required for stable association of tmRNA with ribosomes. tmRNA and SmpB together mimic tRNA shape, replacing the anticodon stem-loop with SmpB. tmRNA is encoded by the ssrA gene; the 2 termini fold to resemble tRNA(Ala) and it encodes a 'tag peptide', a short internal open reading frame. During trans-translation Ala-aminoacylated tmRNA acts like a tRNA, entering the A-site of stalled ribosomes, displacing the stalled mRNA. The ribosome then switches to translate the ORF on the tmRNA; the nascent peptide is terminated with the 'tag peptide' encoded by the tmRNA and targeted for degradation. The ribosome is freed to recommence translation, which seems to be the essential function of trans-translation. The protein is SsrA-binding protein of Streptococcus uberis (strain ATCC BAA-854 / 0140J).